The primary structure comprises 275 residues: Ribosomal protein L11 methyltransferase (275 aa).

S-adenosyl-L-methionine-binding residues include threonine 130, glycine 151, aspartate 172, and asparagine 213.

Belongs to the methyltransferase superfamily. PrmA family.

Its subcellular location is the cytoplasm. It catalyses the reaction L-lysyl-[protein] + 3 S-adenosyl-L-methionine = N(6),N(6),N(6)-trimethyl-L-lysyl-[protein] + 3 S-adenosyl-L-homocysteine + 3 H(+). Its function is as follows. Methylates ribosomal protein L11. This is Ribosomal protein L11 methyltransferase from Wolinella succinogenes (strain ATCC 29543 / DSM 1740 / CCUG 13145 / JCM 31913 / LMG 7466 / NCTC 11488 / FDC 602W) (Vibrio succinogenes).